We begin with the raw amino-acid sequence, 418 residues long: Glutamyl-tRNA reductase (418 aa).

Residues 49–52 (TCNR), S109, 114–116 (EPQ), and Q120 contribute to the substrate site. The active-site Nucleophile is C50. 189–194 (GAGETI) contacts NADP(+).

The protein belongs to the glutamyl-tRNA reductase family. As to quaternary structure, homodimer.

The catalysed reaction is (S)-4-amino-5-oxopentanoate + tRNA(Glu) + NADP(+) = L-glutamyl-tRNA(Glu) + NADPH + H(+). The protein operates within porphyrin-containing compound metabolism; protoporphyrin-IX biosynthesis; 5-aminolevulinate from L-glutamyl-tRNA(Glu): step 1/2. Its function is as follows. Catalyzes the NADPH-dependent reduction of glutamyl-tRNA(Glu) to glutamate 1-semialdehyde (GSA). In Pectobacterium atrosepticum (strain SCRI 1043 / ATCC BAA-672) (Erwinia carotovora subsp. atroseptica), this protein is Glutamyl-tRNA reductase.